Consider the following 238-residue polypeptide: Ribonuclease PH (238 aa).

Residues R86 and 124–126 (GTR) contribute to the phosphate site.

It belongs to the RNase PH family. As to quaternary structure, homohexameric ring arranged as a trimer of dimers.

It catalyses the reaction tRNA(n+1) + phosphate = tRNA(n) + a ribonucleoside 5'-diphosphate. Its function is as follows. Phosphorolytic 3'-5' exoribonuclease that plays an important role in tRNA 3'-end maturation. Removes nucleotide residues following the 3'-CCA terminus of tRNAs; can also add nucleotides to the ends of RNA molecules by using nucleoside diphosphates as substrates, but this may not be physiologically important. Probably plays a role in initiation of 16S rRNA degradation (leading to ribosome degradation) during starvation. The protein is Ribonuclease PH of Sphingopyxis alaskensis (strain DSM 13593 / LMG 18877 / RB2256) (Sphingomonas alaskensis).